A 275-amino-acid chain; its full sequence is Lacto-N-neotetraose biosynthesis glycosyltransferase LgtB (275 aa).

Belongs to the glycosyltransferase 25 family.

The protein operates within glycan metabolism; lacto-N-neotetraose biosynthesis. Its pathway is bacterial outer membrane biogenesis; lipooligosaccharide biosynthesis. Functionally, adds the second galactose to the lacto-N-tetraose chain in lipooligosaccharide (LOS). The protein is Lacto-N-neotetraose biosynthesis glycosyltransferase LgtB (lgtB) of Neisseria meningitidis serogroup B (strain ATCC BAA-335 / MC58).